The primary structure comprises 247 residues: DNA repair protein RecO (247 aa).

The protein belongs to the RecO family.

In terms of biological role, involved in DNA repair and RecF pathway recombination. In Brucella abortus (strain 2308), this protein is DNA repair protein RecO.